The sequence spans 142 residues: uncharacterized protein (142 aa).

A signal peptide spans 1 to 20 (MPSVNEFFIFFLIVWHTCEC). Asn80 is a glycosylation site (N-linked (GlcNAc...) asparagine).

This is an uncharacterized protein from Dictyostelium discoideum (Social amoeba).